Here is a 406-residue protein sequence, read N- to C-terminus: LIM/homeobox protein Lhx1 (406 aa).

LIM zinc-binding domains follow at residues Cys-4–Asp-54 and Cys-63–Asp-117. Disordered stretches follow at residues Asn-128–Ala-189 and Asp-294–Val-372. Residues Ser-137–Pro-148 show a composition bias toward low complexity. A compositionally biased stretch (basic and acidic residues) spans Asp-151 to Gly-167. Ser-162 bears the Phosphoserine mark. The homeobox DNA-binding region spans Arg-180–Lys-239. Over residues Pro-315–Leu-327 the composition is skewed to low complexity. A compositionally biased stretch (pro residues) spans Gly-352–Pro-362.

In terms of assembly, interacts with LDB1 via the tandem LIM domains.

Its subcellular location is the nucleus. Functionally, potential transcription factor. May play a role in early mesoderm formation and later in lateral mesoderm differentiation and neurogenesis. The chain is LIM/homeobox protein Lhx1 (Lhx1) from Mesocricetus auratus (Golden hamster).